A 445-amino-acid polypeptide reads, in one-letter code: Ribosomal protein uS12 methylthiotransferase RimO (445 aa).

The 111-residue stretch at 11 to 121 (PKISFVSLGC…VLDAVHRASP (111 aa)) folds into the MTTase N-terminal domain. [4Fe-4S] cluster is bound by residues cysteine 20, cysteine 56, cysteine 85, cysteine 152, cysteine 156, and cysteine 159. A Radical SAM core domain is found at 138–375 (LTPRHYAYLK…MARQQKISAR (238 aa)). Residues 378-444 (KRKVGTRQQI…EYDLHGTVAG (67 aa)) form the TRAM domain.

The protein belongs to the methylthiotransferase family. RimO subfamily. [4Fe-4S] cluster serves as cofactor.

The protein localises to the cytoplasm. It carries out the reaction L-aspartate(89)-[ribosomal protein uS12]-hydrogen + (sulfur carrier)-SH + AH2 + 2 S-adenosyl-L-methionine = 3-methylsulfanyl-L-aspartate(89)-[ribosomal protein uS12]-hydrogen + (sulfur carrier)-H + 5'-deoxyadenosine + L-methionine + A + S-adenosyl-L-homocysteine + 2 H(+). Functionally, catalyzes the methylthiolation of an aspartic acid residue of ribosomal protein uS12. The sequence is that of Ribosomal protein uS12 methylthiotransferase RimO from Bradyrhizobium sp. (strain ORS 278).